Consider the following 227-residue polypeptide: Large ribosomal subunit protein uL3 (227 aa).

Residue glutamine 158 is modified to N5-methylglutamine.

It belongs to the universal ribosomal protein uL3 family. As to quaternary structure, part of the 50S ribosomal subunit. Forms a cluster with proteins L14 and L19. In terms of processing, methylated by PrmB.

In terms of biological role, one of the primary rRNA binding proteins, it binds directly near the 3'-end of the 23S rRNA, where it nucleates assembly of the 50S subunit. The polypeptide is Large ribosomal subunit protein uL3 (Polaromonas sp. (strain JS666 / ATCC BAA-500)).